The sequence spans 709 residues: Polyribonucleotide nucleotidyltransferase (709 aa).

Positions 489 and 495 each coordinate Mg(2+). One can recognise a KH domain in the interval 556 to 615 (PKIDMIKIDVDKIKVVIGKGGETIDKIIAETGVKIDIDEEGNVSIFSSDQAAIDRTKDII). The 69-residue stretch at 625-693 (GEVYHAKVVR…DKGRVDASMK (69 aa)) folds into the S1 motif domain.

Belongs to the polyribonucleotide nucleotidyltransferase family. Requires Mg(2+) as cofactor.

The protein localises to the cytoplasm. It carries out the reaction RNA(n+1) + phosphate = RNA(n) + a ribonucleoside 5'-diphosphate. In terms of biological role, involved in mRNA degradation. Catalyzes the phosphorolysis of single-stranded polyribonucleotides processively in the 3'- to 5'-direction. The sequence is that of Polyribonucleotide nucleotidyltransferase from Streptococcus agalactiae serotype V (strain ATCC BAA-611 / 2603 V/R).